A 757-amino-acid polypeptide reads, in one-letter code: MTIRNHTLGFPRIGLNRELKKAQESYWAGNISQAELLAVGKELRARHWQQQANAGVELLPVGDFAWYDQVLGTSLLLGNIPPRHRNEDGRLDLDTLFRVARGRAPTGKPAAASEMTKWFNTNYHYIVPEFQQGQSFTLAWQQLLDEVDEALALGHNVKPVLLGPITYLWLGKVKGPEFDRLSLLDAILPVYQQVLSQLQQKGIEWVQIDEPALVLDLPIEWQNAYQVAYQALTGQVKLLLTTYFDGITHHLDIIKNLPVNGLHIDLCAGQDALQVIHQALPKDWVLSLGVINGRNVWKADLTTRYQQVVALKGKRPLWIGTSCSLLHSPIDLSAETKLDDEVKSWFAFAVQKCAEVALLAKALNAPEGEYDEQLAQYSAPIRQREHSSRVHNAKVAARLQAINAQDGERTSPYQQRAKVQRARFNFPLWPTTTIGSFPQTTEIRTVRLDFKKGRIDTTAYRTNISEHIKQAIDEQERLGLDVLVHGEAERNDMVEYFGEHFEGYVFTQNGWVQSYGSRCVKPPVIIGDISRPAPITVDWATYAQSLTDKPVKGMLTGPVTILCWSFPREDVSRETIAKQIALALRDEVDDLQKAGIGIIQIDEPALREGLPLRRDEWQAYLDWAVDAFKLSAAIADDETQIHTHMCYCEFNDIMEAIAALDADVITIETSRSDMELLEAFEHFDYPNEIGPGVYDIHSPNVPNVEWIVGLLRKAQSRIPAERLWVNPDCGLKTRGWSETRAALANMVEAAKYLRQNV.

5-methyltetrahydropteroyltri-L-glutamate contacts are provided by residues 17 to 20 and Lys-117; that span reads RELK. L-homocysteine-binding positions include 434–436 and Glu-487; that span reads IGS. L-methionine contacts are provided by residues 434–436 and Glu-487; that span reads IGS. Residues 518-519 and Trp-564 contribute to the 5-methyltetrahydropteroyltri-L-glutamate site; that span reads RC. Asp-602 contacts L-homocysteine. Asp-602 is an L-methionine binding site. Glu-608 contributes to the 5-methyltetrahydropteroyltri-L-glutamate binding site. Residues His-644, Cys-646, and Glu-668 each coordinate Zn(2+). His-697 acts as the Proton donor in catalysis. Zn(2+) is bound at residue Cys-729.

It belongs to the vitamin-B12 independent methionine synthase family. Zn(2+) is required as a cofactor.

The catalysed reaction is 5-methyltetrahydropteroyltri-L-glutamate + L-homocysteine = tetrahydropteroyltri-L-glutamate + L-methionine. Its pathway is amino-acid biosynthesis; L-methionine biosynthesis via de novo pathway; L-methionine from L-homocysteine (MetE route): step 1/1. In terms of biological role, catalyzes the transfer of a methyl group from 5-methyltetrahydrofolate to homocysteine resulting in methionine formation. The sequence is that of 5-methyltetrahydropteroyltriglutamate--homocysteine methyltransferase from Proteus mirabilis (strain HI4320).